The primary structure comprises 526 residues: Dual specificity tyrosine-phosphorylation-regulated kinase 2 (526 aa).

Composition is skewed to polar residues over residues 30-40 (TTQPNGLTTLG) and 60-70 (GSSSSLKSTDG). The segment at 30–76 (TTQPNGLTTLGKSGLPVVQDRQSESAHRRQGSSSSLKSTDGTGKVKA) is disordered. Threonine 31 carries the post-translational modification Phosphothreonine; by ATM. The short motif at 114 to 116 (KKR) is the Nuclear localization signal element. In terms of domain architecture, Protein kinase spans 147–460 (YEVLKVIGKG…PSQALRHPWL (314 aa)). ATP contacts are provided by residues 153 to 161 (IGKGSFGQV), lysine 176, and 226 to 229 (FELL). The active-site Proton acceptor is aspartate 273. A Phosphotyrosine modification is found at tyrosine 307. A Phosphoserine; by ATM modification is found at serine 367. Residues 462-499 (RRLPKPPTGEKASAKRITESTGAITSISKLPPTSSSAS) are disordered. Residues 480 to 499 (ESTGAITSISKLPPTSSSAS) show a composition bias toward polar residues.

It belongs to the protein kinase superfamily. CMGC Ser/Thr protein kinase family. MNB/DYRK subfamily. In terms of assembly, interacts with MDM2. Requires Mg(2+) as cofactor. Mn(2+) is required as a cofactor. Post-translationally, phosphorylated on serine/threonine residues. Phosphorylation on Thr-31 and Ser-367 by ATM in response to genotoxic stress disrupts MDM2 binding and prevents MDM2-mediated ubiquitination and subsequent proteasome degradation, thus promoting p53/TP53-mediated apoptosis. Ubiquitination in nucleus by MDM2 in normal conditions leads to proteasome degradation.

The protein resides in the cytoplasm. It localises to the nucleus. The enzyme catalyses L-seryl-[protein] + ATP = O-phospho-L-seryl-[protein] + ADP + H(+). The catalysed reaction is L-threonyl-[protein] + ATP = O-phospho-L-threonyl-[protein] + ADP + H(+). It carries out the reaction L-tyrosyl-[protein] + ATP = O-phospho-L-tyrosyl-[protein] + ADP + H(+). Autophosphorylates on tyrosine residues. Serine/threonine-protein kinase involved in the control of mitotic transition and the regulation of cellular growth and/or development. The protein is Dual specificity tyrosine-phosphorylation-regulated kinase 2 of Gallus gallus (Chicken).